The sequence spans 242 residues: MPSPKYKRVVLKLSGEALAGEKGYGIDPEVVNSIAGQIAEIIKEFGIQVAVVVGGGNIWRGLSGSAKGMDRATADYMGMLATVINSLALQDALEKLGIDTRVQTAIEMRQIAEPYIRRRAIRHLEKGRVVIFAAGTGNPYFSTDTTAALRAAEIEAEVILMAKRVDGVYDSDPLKNPNAQKFDELEYIEVLNRGLGVMDSTATSLCMDNNIPLIVFNLEVPGNIKRVILGENIGTIVGGERK.

Position 12–15 (12–15) interacts with ATP; it reads KLSG. Positions 20-25 are involved in allosteric activation by GTP; that stretch reads GEKGYG. Gly55 provides a ligand contact to UMP. Positions 56 and 60 each coordinate ATP. UMP-binding positions include Asp75 and 136-143; that span reads TGNPYFST. ATP is bound by residues Tyr169 and Asp172.

The protein belongs to the UMP kinase family. In terms of assembly, homohexamer.

The protein localises to the cytoplasm. The enzyme catalyses UMP + ATP = UDP + ADP. Its pathway is pyrimidine metabolism; CTP biosynthesis via de novo pathway; UDP from UMP (UMPK route): step 1/1. Allosterically activated by GTP. Inhibited by UTP. Its function is as follows. Catalyzes the reversible phosphorylation of UMP to UDP. The chain is Uridylate kinase from Carboxydothermus hydrogenoformans (strain ATCC BAA-161 / DSM 6008 / Z-2901).